Consider the following 313-residue polypeptide: Kazal-type serine protease inhibitor domain-containing protein 1 (313 aa).

A signal peptide spans 1-37 (MPRVFTGLPANYAAPTLALSLLLPLLLVVWTQLPVSA). Residues 56 to 136 (EGEGCAPCRP…EVPEPLCVCR (81 aa)) form the IGFBP N-terminal domain. Cystine bridges form between Cys60–Cys83, Cys63–Cys85, Cys68–Cys86, Cys74–Cys89, Cys97–Cys115, Cys109–Cys133, and Cys142–Cys175. The region spanning 127-177 (EVPEPLCVCRSQRPLCGSDGRTYAQICRLQEAARARLDANLTVVHPGPCES) is the Kazal-like domain. 2 N-linked (GlcNAc...) asparagine glycosylation sites follow: Asn166 and Asn190. Positions 179–276 (PQILSQPHNI…GQAEASATLT (98 aa)) constitute an Ig-like C2-type domain. A disulfide bridge connects residues Cys200 and Cys260. N-linked (GlcNAc...) asparagine glycosylation is present at Asn284. The tract at residues 290–313 (QLQSRSLFPEEEEEAESEELGDYY) is disordered. Residues 298–313 (PEEEEEAESEELGDYY) are compositionally biased toward acidic residues.

As to expression, highly expressed in the spleen. Moderately expressed in the skin, lung and urinary bladder. Weakly expressed in the brain, tongue, esophagus, stomach, large intestine, liver and bone. Expressed in osteoblastic cells during bone regeneration. Expressed in secretory osteoblasts in the tooth.

It is found in the secreted. The protein localises to the extracellular space. It localises to the extracellular matrix. Its function is as follows. Involved in the proliferation of osteoblasts during bone formation and bone regeneration. Promotes matrix assembly. The chain is Kazal-type serine protease inhibitor domain-containing protein 1 (Kazald1) from Mus musculus (Mouse).